Consider the following 202-residue polypeptide: Dephospho-CoA kinase (202 aa).

One can recognise a DPCK domain in the interval 6-202; that stretch reads KVSITGDLSS…EYFYALKGAL (197 aa). 14–19 provides a ligand contact to ATP; that stretch reads SSGKTE.

It belongs to the CoaE family.

Its subcellular location is the cytoplasm. The catalysed reaction is 3'-dephospho-CoA + ATP = ADP + CoA + H(+). The protein operates within cofactor biosynthesis; coenzyme A biosynthesis; CoA from (R)-pantothenate: step 5/5. Functionally, catalyzes the phosphorylation of the 3'-hydroxyl group of dephosphocoenzyme A to form coenzyme A. This Chlamydia felis (strain Fe/C-56) (Chlamydophila felis) protein is Dephospho-CoA kinase.